A 265-amino-acid chain; its full sequence is Aquaporin-5 (265 aa).

Topologically, residues 1-12 are cytoplasmic; the sequence is MKKEVCSLAFLK. The chain crosses the membrane as a helical span at residues 13–33; sequence AVFAEFLATLIFVFFGLASAL. Topologically, residues 34–39 are extracellular; sequence KWPSAL. Residues 40–60 form a helical membrane-spanning segment; sequence PTILQIALAFGLAIGTLAQAL. The Cytoplasmic portion of the chain corresponds to 61 to 65; the sequence is GPVSG. The discontinuously helical intramembrane region spans 66-74; the sequence is GHINPAITL. Residues 69-71 carry the NPA 1 motif; that stretch reads NPA. The Cytoplasmic portion of the chain corresponds to 75–87; that stretch reads ALLVGNQISLLRA. Residues 88 to 108 form a helical membrane-spanning segment; it reads VFYVVAQLVGAIAGAGILYGL. Residues 109-126 are Extracellular-facing; sequence APGNARGNLAVNSLNNNT. N-linked (GlcNAc...) asparagine glycosylation is present at N124. Residues 127–147 traverse the membrane as a helical segment; the sequence is TPGQAVVVEMILTFQLALCIF. Residues 148–158 are Cytoplasmic-facing; the sequence is SSTDSRRTSPV. A helical transmembrane segment spans residues 159–179; sequence GSPALSIGLSVTLGHLVGIYF. Residue T180 is a topological domain, extracellular. The segment at residues 181–191 is an intramembrane region (discontinuously helical); it reads GCSMNPARSFG. The NPA 2 signature appears at 185 to 187; that stretch reads NPA. At 192 to 203 the chain is on the extracellular side; it reads PAVVMNRFSPSH. A helical transmembrane segment spans residues 204 to 224; it reads WVFWVGPIVGAAVAAILYFYL. Topologically, residues 225–265 are cytoplasmic; sequence LFPNSLSLSERVAVVKGTYESEEDWEEQREERKKTMELTAH.

The protein belongs to the MIP/aquaporin (TC 1.A.8) family. Homotetramer; each monomer provides an independent water pore. Interacts with TRPV4; the interaction is probably indirect and regulates TRPV4 activation by hypotonicity.

The protein localises to the apical cell membrane. It localises to the cell membrane. It is found in the cytoplasmic vesicle membrane. The catalysed reaction is H2O(in) = H2O(out). Functionally, aquaporins form homotetrameric transmembrane channels, with each monomer independently mediating water transport across the plasma membrane along its osmotic gradient. Plays an important role in fluid secretion in salivary glands. Required for TRPV4 activation by hypotonicity. Together with TRPV4, controls regulatory volume decrease in salivary epithelial cells. Seems to play a redundant role in water transport in the eye, lung and in sweat glands. The polypeptide is Aquaporin-5 (Sus scrofa (Pig)).